A 287-amino-acid chain; its full sequence is Leucine-rich repeat-containing protein 72 (287 aa).

LRR repeat units lie at residues 46 to 67, 68 to 89, 90 to 111, and 112 to 133; these read DVFE…SRFK, KLKY…TRNY, CLTE…HYLP, and SLHI…VKEL. Positions 147–185 constitute an LRRCT domain; that stretch reads NPLCQYNLYRLYIIYHLPGVELLDRNQVTEKERRSMITI.

This Homo sapiens (Human) protein is Leucine-rich repeat-containing protein 72 (LRRC72).